Reading from the N-terminus, the 416-residue chain is Imidazolonepropionase (416 aa).

Positions 81 and 83 each coordinate Fe(3+). Positions 81 and 83 each coordinate Zn(2+). Positions 90, 153, and 186 each coordinate 4-imidazolone-5-propanoate. Residue Y153 participates in N-formimidoyl-L-glutamate binding. Position 251 (H251) interacts with Fe(3+). H251 provides a ligand contact to Zn(2+). 4-imidazolone-5-propanoate is bound at residue Q254. D326 provides a ligand contact to Fe(3+). D326 serves as a coordination point for Zn(2+). 2 residues coordinate N-formimidoyl-L-glutamate: N328 and G330. 4-imidazolone-5-propanoate is bound at residue T331.

Belongs to the metallo-dependent hydrolases superfamily. HutI family. Zn(2+) serves as cofactor. It depends on Fe(3+) as a cofactor.

The protein localises to the cytoplasm. It catalyses the reaction 4-imidazolone-5-propanoate + H2O = N-formimidoyl-L-glutamate. It participates in amino-acid degradation; L-histidine degradation into L-glutamate; N-formimidoyl-L-glutamate from L-histidine: step 3/3. In terms of biological role, catalyzes the hydrolytic cleavage of the carbon-nitrogen bond in imidazolone-5-propanoate to yield N-formimidoyl-L-glutamate. It is the third step in the universal histidine degradation pathway. The polypeptide is Imidazolonepropionase (Paracidovorax citrulli (strain AAC00-1) (Acidovorax citrulli)).